The sequence spans 287 residues: Protease HtpX (287 aa).

Helical transmembrane passes span 4–24 (ILLFLATNLAVVLVLSVVLNI) and 36–56 (LSGLLVMAAVFGFGGAFISLL). Position 143 (His143) interacts with Zn(2+). Glu144 is a catalytic residue. His147 lines the Zn(2+) pocket. 2 helical membrane passes run 158-178 (LMQGVVNTFVIFLSRFIANIV) and 192-212 (MVYFGVSMVLELVFGFLASFI). Residue Glu221 coordinates Zn(2+).

Belongs to the peptidase M48B family. Zn(2+) serves as cofactor.

Its subcellular location is the cell inner membrane. This chain is Protease HtpX, found in Vibrio cholerae serotype O1 (strain ATCC 39315 / El Tor Inaba N16961).